Reading from the N-terminus, the 368-residue chain is Phosphoserine aminotransferase (368 aa).

L-glutamate is bound at residue arginine 42. The pyridoxal 5'-phosphate site is built by tryptophan 101, threonine 151, aspartate 175, and glutamine 198. Lysine 199 is subject to N6-(pyridoxal phosphate)lysine. Residue 240-241 participates in pyridoxal 5'-phosphate binding; it reads NT.

It belongs to the class-V pyridoxal-phosphate-dependent aminotransferase family. SerC subfamily. As to quaternary structure, homodimer. The cofactor is pyridoxal 5'-phosphate.

It is found in the cytoplasm. It catalyses the reaction O-phospho-L-serine + 2-oxoglutarate = 3-phosphooxypyruvate + L-glutamate. The catalysed reaction is 4-(phosphooxy)-L-threonine + 2-oxoglutarate = (R)-3-hydroxy-2-oxo-4-phosphooxybutanoate + L-glutamate. It participates in amino-acid biosynthesis; L-serine biosynthesis; L-serine from 3-phospho-D-glycerate: step 2/3. It functions in the pathway cofactor biosynthesis; pyridoxine 5'-phosphate biosynthesis; pyridoxine 5'-phosphate from D-erythrose 4-phosphate: step 3/5. In terms of biological role, catalyzes the reversible conversion of 3-phosphohydroxypyruvate to phosphoserine and of 3-hydroxy-2-oxo-4-phosphonooxybutanoate to phosphohydroxythreonine. This Polaromonas sp. (strain JS666 / ATCC BAA-500) protein is Phosphoserine aminotransferase.